The primary structure comprises 253 residues: Dihydroanticapsin 7-dehydrogenase (253 aa).

An NAD(+)-binding site is contributed by 9 to 31; the sequence is LITGGASGIGYAAVQAFLGQQAN. Serine 139 contributes to the substrate binding site. Residue tyrosine 152 is the Proton acceptor of the active site.

It belongs to the short-chain dehydrogenases/reductases (SDR) family.

It catalyses the reaction L-dihydroanticapsin + NAD(+) = L-anticapsin + NADH + H(+). The protein operates within antibiotic biosynthesis; bacilysin biosynthesis. Part of the bacABCDEFG operon responsible for the biosynthesis of bacilysin, an irreversible inactivator of the glutaminase domain of glucosamine synthetase. Catalyzes the dehydrogenation of the C7-hydroxyl group in the 4S-tetrahydrotyrosine (4S-H4Tyr) to yield anticapsin (epoxycyclohexanonyl-Ala). It is not able to oxidize the 4R-H4Tyr diastereomer and the dihydrobacilysin dipeptide (L-Ala-4S-H4Tyr dipeptide). In Bacillus subtilis (strain 168), this protein is Dihydroanticapsin 7-dehydrogenase.